The primary structure comprises 130 residues: Hydrogenase maturation factor HypA (130 aa).

Residue His2 coordinates Ni(2+). The Zn(2+) site is built by Cys74, Cys77, Cys90, and Cys93.

It belongs to the HypA/HybF family.

Its function is as follows. Involved in the maturation of [NiFe] hydrogenases. Required for nickel insertion into the metal center of the hydrogenase. This Desulfatibacillum aliphaticivorans protein is Hydrogenase maturation factor HypA.